Here is a 328-residue protein sequence, read N- to C-terminus: DNA-directed RNA polymerase subunit alpha (328 aa).

Residues 1-232 (MSTQGFLKPR…DQISVFAALE (232 aa)) are alpha N-terminal domain (alpha-NTD). The segment at 248–328 (IDPVLLRPVD…NWPPLGLERP (81 aa)) is alpha C-terminal domain (alpha-CTD).

Belongs to the RNA polymerase alpha chain family. Homodimer. The RNAP catalytic core consists of 2 alpha, 1 beta, 1 beta' and 1 omega subunit. When a sigma factor is associated with the core the holoenzyme is formed, which can initiate transcription.

It catalyses the reaction RNA(n) + a ribonucleoside 5'-triphosphate = RNA(n+1) + diphosphate. DNA-dependent RNA polymerase catalyzes the transcription of DNA into RNA using the four ribonucleoside triphosphates as substrates. The chain is DNA-directed RNA polymerase subunit alpha from Bordetella bronchiseptica (strain ATCC BAA-588 / NCTC 13252 / RB50) (Alcaligenes bronchisepticus).